The sequence spans 40 residues: MRGNPEVIDYLNMLIGGELAARDQYLIHSRMYEDWGLTKY.

In terms of domain architecture, Ferritin-like diiron spans 1–40 (MRGNPEVIDYLNMLIGGELAARDQYLIHSRMYEDWGLTKY). Glu-18 contacts Fe cation.

This sequence belongs to the bacterioferritin family. In terms of assembly, oligomer consisting of two types of subunits: light chain and heavy chain.

Its function is as follows. May perform analogous functions in iron detoxification and storage to that of animal ferritins. Contains approximately 750 iron atoms per molecule. This Absidia spinosa protein is Bacterioferritin heavy chain.